The chain runs to 354 residues: Methionine import ATP-binding protein MetN (354 aa).

The 243-residue stretch at 8–250 (LDHIDITFRQ…PKEALTQKFI (243 aa)) folds into the ABC transporter domain. 42–49 (GYSGAGKS) is a binding site for ATP.

The protein belongs to the ABC transporter superfamily. Methionine importer (TC 3.A.1.24) family. The complex is composed of two ATP-binding proteins (MetN), two transmembrane proteins (MetI) and a solute-binding protein (MetQ).

It localises to the cell membrane. It carries out the reaction L-methionine(out) + ATP + H2O = L-methionine(in) + ADP + phosphate + H(+). It catalyses the reaction D-methionine(out) + ATP + H2O = D-methionine(in) + ADP + phosphate + H(+). Part of the ABC transporter complex MetNIQ involved in methionine import. Responsible for energy coupling to the transport system. In Streptococcus pyogenes serotype M6 (strain ATCC BAA-946 / MGAS10394), this protein is Methionine import ATP-binding protein MetN.